The sequence spans 541 residues: NAD(P)H-quinone oxidoreductase subunit 2 A, chloroplastic (541 aa).

Helical transmembrane passes span 24-44 (LLLFDGSLIFPECILIFGLIL), 57-77 (IPWLYFIPSTSLVMSITALLF), 99-119 (IFQFLILLCSTLCIPLSVEYI), 124-144 (MAITEFLLFVLTATLGGMFLC), 149-169 (FITIFVAPECFSLCSYLLSGY), 183-203 (YLLMGGASSSILVHGFSWLYG), 227-247 (PGISIALIFITVGIGFKLSPA), 289-309 (ILSPTPVVAFLSVTSKVAASA), 326-346 (WHLLLEILAILSMILGNLIAI), 354-374 (MLAYSSIGQIGYVIIGIIVGD), 385-405 (YMLFYISMNLGTFACIVLFGL), 426-446 (ALSLALCLLSLGGLPPLAGFF), 449-469 (LYLFWCGWQAGLYFLVLIGLL), and 515-535 (MIVCVIASTIPGISMNPIIAI).

This sequence belongs to the complex I subunit 2 family. As to quaternary structure, NDH is composed of at least 16 different subunits, 5 of which are encoded in the nucleus.

The protein resides in the plastid. It is found in the chloroplast thylakoid membrane. The catalysed reaction is a plastoquinone + NADH + (n+1) H(+)(in) = a plastoquinol + NAD(+) + n H(+)(out). It catalyses the reaction a plastoquinone + NADPH + (n+1) H(+)(in) = a plastoquinol + NADP(+) + n H(+)(out). Functionally, NDH shuttles electrons from NAD(P)H:plastoquinone, via FMN and iron-sulfur (Fe-S) centers, to quinones in the photosynthetic chain and possibly in a chloroplast respiratory chain. The immediate electron acceptor for the enzyme in this species is believed to be plastoquinone. Couples the redox reaction to proton translocation, and thus conserves the redox energy in a proton gradient. This Coffea arabica (Arabian coffee) protein is NAD(P)H-quinone oxidoreductase subunit 2 A, chloroplastic.